We begin with the raw amino-acid sequence, 148 residues long: MTKKKKIRVVTGGVFDILHVGHIHFLKQAKELGDELVVIVAHDKTVEERKGRRPINSMYERAEVLKALKMVDEVVIGEPNCISFEIVKQLNPDIIALGPDQNFDVSALKEELKKKNINAEVIRIPYAYKSDVAKTSKIIQKIVETFCE.

ATP is bound by residues 14–15 (VF), 19–22 (HVGH), and D100.

This sequence belongs to the archaeal FAD synthase family. Homodimer. A divalent metal cation serves as cofactor.

It carries out the reaction FMN + ATP + H(+) = FAD + diphosphate. Its pathway is cofactor biosynthesis; FAD biosynthesis; FAD from FMN: step 1/1. Catalyzes the transfer of the AMP portion of ATP to flavin mononucleotide (FMN) to produce flavin adenine dinucleotide (FAD) coenzyme. In Thermococcus sibiricus (strain DSM 12597 / MM 739), this protein is FAD synthase.